A 697-amino-acid chain; its full sequence is Mediator of RNA polymerase II transcription subunit 16 (697 aa).

WD repeat units lie at residues 68-107 (GHQEVITCLEWDQSGSRLLSADADGRIKCWGMTDHLANSW), 199-241 (RCRV…VSEK), 264-308 (DKFP…LPLN), and 622-663 (NQGS…CLPV).

The protein belongs to the Mediator complex subunit 16 family. In terms of assembly, component of the Mediator complex.

It localises to the nucleus. Component of the Mediator complex, a coactivator involved in the regulated transcription of nearly all RNA polymerase II-dependent genes. Mediator functions as a bridge to convey information from gene-specific regulatory proteins to the basal RNA polymerase II transcription machinery. Mediator is recruited to promoters by direct interactions with regulatory proteins and serves as a scaffold for the assembly of a functional preinitiation complex with RNA polymerase II and the general transcription factors. The sequence is that of Mediator of RNA polymerase II transcription subunit 16 (med16) from Xenopus laevis (African clawed frog).